Here is a 481-residue protein sequence, read N- to C-terminus: MQDKTHSPIHVVGGGLAGSEAAWQIAESGVPVILHEMRGVRGTDAHKGDTLAELVCSNSFRSDDATANAVGVIHAEMRLAGSLIIACADKHQVPAGGALAVDRDGFSQAVTDMLENHPLVTVVREEVTGLPPKEWGSTVIATGPLTSPDLAAAVQAETGEDALAFFDAIAPILHRDSINMDICWYQSRYDKVGPGGTGKDYINCPMDEEQYNVFIDALIAGDTVGFKEWEGTPYFDGCLPIEIMAERGRQTLRHGPMKPMGLTNAHNPTVKAYAVVQLRQDNALGTLYNMVGFQTKLKYSVQADVFRMIPGLENAEFARLGGLHRNTYIDSPILLDRSLRLKSRPDLRFAGQITGCEGYVESASVGLLAGRFAAAERKGEAPSLPPATTALGSLLNHITGGHLSSDDEPGKRSFQPMNINFGLFPELEPGSIVKPDGVKRFRGKDKTIMKRQLVAARALKDCAAWLGVERVATEQESDATP.

13 to 18 (GGGLAG) serves as a coordination point for FAD.

It belongs to the MnmG family. TrmFO subfamily. The cofactor is FAD.

Its subcellular location is the cytoplasm. The catalysed reaction is uridine(54) in tRNA + (6R)-5,10-methylene-5,6,7,8-tetrahydrofolate + NADH + H(+) = 5-methyluridine(54) in tRNA + (6S)-5,6,7,8-tetrahydrofolate + NAD(+). It carries out the reaction uridine(54) in tRNA + (6R)-5,10-methylene-5,6,7,8-tetrahydrofolate + NADPH + H(+) = 5-methyluridine(54) in tRNA + (6S)-5,6,7,8-tetrahydrofolate + NADP(+). In terms of biological role, catalyzes the folate-dependent formation of 5-methyl-uridine at position 54 (M-5-U54) in all tRNAs. The polypeptide is Methylenetetrahydrofolate--tRNA-(uracil-5-)-methyltransferase TrmFO (Agrobacterium fabrum (strain C58 / ATCC 33970) (Agrobacterium tumefaciens (strain C58))).